We begin with the raw amino-acid sequence, 346 residues long: Histidinol-phosphate aminotransferase (346 aa).

At K209 the chain carries N6-(pyridoxal phosphate)lysine.

The protein belongs to the class-II pyridoxal-phosphate-dependent aminotransferase family. Histidinol-phosphate aminotransferase subfamily. As to quaternary structure, homodimer. The cofactor is pyridoxal 5'-phosphate.

It catalyses the reaction L-histidinol phosphate + 2-oxoglutarate = 3-(imidazol-4-yl)-2-oxopropyl phosphate + L-glutamate. It functions in the pathway amino-acid biosynthesis; L-histidine biosynthesis; L-histidine from 5-phospho-alpha-D-ribose 1-diphosphate: step 7/9. The polypeptide is Histidinol-phosphate aminotransferase (Vibrio cholerae serotype O1 (strain ATCC 39315 / El Tor Inaba N16961)).